The following is a 76-amino-acid chain: Protein OPG128 (76 aa).

C17 and C21 are disulfide-bonded.

The protein belongs to the orthopoxvirus OPG128 family. Interacts with sulfhydryl oxidase OPG072; this interaction involves formation of a transient disulfide-bonded intermediate, allowing disulfide bond transfer. Interacts with OPG088; this interaction involves formation of a transient disulfide-bonded intermediate, allowing disulfide bond transfer.

Functionally, late protein which probably participates in disulfide bond formation by functioning as a thiol-disulfide transfer protein between membrane-associated OPG072 and OPG08. The complete pathway for formation of disulfide bonds in intracellular virion membrane proteins sequentially involves oxidation of OPG072, OPG128 and OPG08. This chain is Protein OPG128 (OPG128), found in Bos taurus (Bovine).